The sequence spans 142 residues: Hemoglobin subunit alpha (142 aa).

One can recognise a Globin domain in the interval valine 2–arginine 142. Phosphoserine is present on serine 4. 2 positions are modified to N6-succinyllysine: lysine 8 and lysine 12. N6-acetyllysine; alternate is present on lysine 17. Lysine 17 is subject to N6-succinyllysine; alternate. Residue tyrosine 25 is modified to Phosphotyrosine. A Phosphoserine modification is found at serine 36. Lysine 41 is subject to N6-succinyllysine. Residue serine 50 is modified to Phosphoserine. Residue histidine 59 participates in O2 binding. Histidine 88 is a binding site for heme b. Serine 103 carries the phosphoserine modification. Threonine 109 is subject to Phosphothreonine. Phosphoserine occurs at positions 125 and 132. A phosphothreonine mark is found at threonine 135 and threonine 138. Serine 139 carries the post-translational modification Phosphoserine.

It belongs to the globin family. Heterotetramer of two alpha chains and two beta chains. Red blood cells.

Functionally, involved in oxygen transport from the lung to the various peripheral tissues. In terms of biological role, hemopressin acts as an antagonist peptide of the cannabinoid receptor CNR1. Hemopressin-binding efficiently blocks cannabinoid receptor CNR1 and subsequent signaling. The chain is Hemoglobin subunit alpha (HBA) from Ateles geoffroyi (Black-handed spider monkey).